A 909-amino-acid polypeptide reads, in one-letter code: E3 ubiquitin-protein ligase HACE1 (909 aa).

The interval 1–21 (MERAMEQLNRLTRSLRRARTV) is N-terminal helix important for homodimerization. ANK repeat units lie at residues 23–55 (LPEDNETAVYTLMPMVMADQHRSVSELLSNSKF), 64–93 (VKRSLLHIAANCGSVECLVLLLKKGANPNY), 97–126 (SGCTPLHLAARNGQKKCMSKLLEYSADVNI), 130–159 (EGLTAIHWLAVNGRTELLHDLVQHVTDVDV), 163–192 (MGQTALHVACQNGHKTTVQCLLDSGADINR), 196–226 (SGATPLYFACSHGQRDTAQILLLRGAKYLPD), and 228–253 (NGVTPLDLCVQGGYGQTCEVLIQYHP). The interval 398 to 433 (QDQEAPSLSAFEPPGPGSYESLPPGPGDSKPEVLAG) is disordered. One can recognise an HECT domain in the interval 574–909 (NCAKLKQGIA…HCGSYGYTMA (336 aa)). Catalysis depends on Cys-876, which acts as the Glycyl thioester intermediate.

As to quaternary structure, homodimer. The homodimer is autoinhibited and stabilized by its N-terminal helix. Interacts with RAB1 (RAB1A, RAB1B or RAB1C), RAB4 (RAB4A or RAB4B) and RAB11 (RAB11A or RAB11B); in a GTP-dependent manner. Interacts with the 26S proteasomal complex through the 20S core proteasomal subunit. Interacts with RARB. Post-translationally, autoubiquitinated.

It localises to the golgi apparatus. The protein resides in the golgi stack membrane. It is found in the cytoplasm. Its subcellular location is the endoplasmic reticulum. The catalysed reaction is S-ubiquitinyl-[E2 ubiquitin-conjugating enzyme]-L-cysteine + [acceptor protein]-L-lysine = [E2 ubiquitin-conjugating enzyme]-L-cysteine + N(6)-ubiquitinyl-[acceptor protein]-L-lysine.. It functions in the pathway protein modification; protein ubiquitination. With respect to regulation, sterically autoinhibited in its dimeric state. E3 ubiquitin-protein ligase involved in Golgi membrane fusion and regulation of small GTPases. Acts as a regulator of Golgi membrane dynamics during the cell cycle: recruited to Golgi membrane by Rab proteins and regulates postmitotic Golgi membrane fusion. Acts by mediating ubiquitination during mitotic Golgi disassembly, ubiquitination serving as a signal for Golgi reassembly later, after cell division. Specifically binds GTP-bound RAC1, mediating ubiquitination and subsequent degradation of active RAC1, thereby playing a role in host defense against pathogens. May also act as a transcription regulator via its interaction with RARB. The polypeptide is E3 ubiquitin-protein ligase HACE1 (Hace1) (Mus musculus (Mouse)).